The following is a 257-amino-acid chain: Imidazole glycerol phosphate synthase subunit HisF (257 aa).

Catalysis depends on residues Asp12 and Asp131.

Belongs to the HisA/HisF family. As to quaternary structure, heterodimer of HisH and HisF.

It localises to the cytoplasm. The enzyme catalyses 5-[(5-phospho-1-deoxy-D-ribulos-1-ylimino)methylamino]-1-(5-phospho-beta-D-ribosyl)imidazole-4-carboxamide + L-glutamine = D-erythro-1-(imidazol-4-yl)glycerol 3-phosphate + 5-amino-1-(5-phospho-beta-D-ribosyl)imidazole-4-carboxamide + L-glutamate + H(+). The protein operates within amino-acid biosynthesis; L-histidine biosynthesis; L-histidine from 5-phospho-alpha-D-ribose 1-diphosphate: step 5/9. IGPS catalyzes the conversion of PRFAR and glutamine to IGP, AICAR and glutamate. The HisF subunit catalyzes the cyclization activity that produces IGP and AICAR from PRFAR using the ammonia provided by the HisH subunit. The protein is Imidazole glycerol phosphate synthase subunit HisF of Rhodococcus opacus (strain B4).